Reading from the N-terminus, the 421-residue chain is Membrane-associated protein UidC (421 aa).

The N-terminal stretch at 1-23 (MRKIVAMAVICLTAASGLTSAYA) is a signal peptide.

This sequence belongs to the outer membrane porin (Opr) (TC 1.B.25) family.

It localises to the cell outer membrane. In terms of biological role, enhances the activity of the UidB (GusB) glucuronide transporter, on its own however it has no transport activity. Glucuronide transport does not occur in strain K12 due to a variant at position 100 of the UidB (GusB, AC P0CE44, AC P0CE45) protein. In Escherichia coli (strain K12), this protein is Membrane-associated protein UidC (uidC).